A 101-amino-acid chain; its full sequence is uncharacterized protein (101 aa).

Over residues 1–11 (MSDEGYRELVE) the composition is skewed to basic and acidic residues. Residues 1-26 (MSDEGYRELVESKSAPTTPGPWSPDR) are disordered.

This is an uncharacterized protein from Torque teno canis virus (isolate Cf-TTV10).